Consider the following 59-residue polypeptide: MAKLQITLTRSVIGRPETQRKTVEALGLKKTNSSVVVEDNPAIRGQINKVKHLLTIEEK.

This sequence belongs to the universal ribosomal protein uL30 family. Part of the 50S ribosomal subunit.

This chain is Large ribosomal subunit protein uL30, found in Staphylococcus epidermidis (strain ATCC 12228 / FDA PCI 1200).